A 196-amino-acid chain; its full sequence is ATP-dependent Clp protease proteolytic subunit (196 aa).

Residue S101 is the Nucleophile of the active site. H126 is an active-site residue.

It belongs to the peptidase S14 family. Component of the chloroplastic Clp protease core complex.

It localises to the plastid. It is found in the chloroplast stroma. The enzyme catalyses Hydrolysis of proteins to small peptides in the presence of ATP and magnesium. alpha-casein is the usual test substrate. In the absence of ATP, only oligopeptides shorter than five residues are hydrolyzed (such as succinyl-Leu-Tyr-|-NHMec, and Leu-Tyr-Leu-|-Tyr-Trp, in which cleavage of the -Tyr-|-Leu- and -Tyr-|-Trp bonds also occurs).. Functionally, cleaves peptides in various proteins in a process that requires ATP hydrolysis. Has a chymotrypsin-like activity. Plays a major role in the degradation of misfolded proteins. The protein is ATP-dependent Clp protease proteolytic subunit of Aethionema cordifolium (Lebanon stonecress).